The primary structure comprises 715 residues: Fatty acid oxidation complex subunit alpha (715 aa).

The segment at 8-197 is enoyl-CoA hydratase; the sequence is NSQPSAFSLT…NLGLVEEAVP (190 aa). The 3-hydroxyacyl-CoA dehydrogenase stretch occupies residues 313 to 715; it reads ATIKKVGVLG…MANEEQSFYS (403 aa).

It in the N-terminal section; belongs to the enoyl-CoA hydratase/isomerase family. This sequence in the central section; belongs to the 3-hydroxyacyl-CoA dehydrogenase family. As to quaternary structure, heterotetramer of two alpha chains (FadJ) and two beta chains (FadI).

It is found in the cytoplasm. The enzyme catalyses a (3S)-3-hydroxyacyl-CoA = a (2E)-enoyl-CoA + H2O. It carries out the reaction a 4-saturated-(3S)-3-hydroxyacyl-CoA = a (3E)-enoyl-CoA + H2O. The catalysed reaction is a (3S)-3-hydroxyacyl-CoA + NAD(+) = a 3-oxoacyl-CoA + NADH + H(+). It catalyses the reaction (3S)-3-hydroxybutanoyl-CoA = (3R)-3-hydroxybutanoyl-CoA. It participates in lipid metabolism; fatty acid beta-oxidation. Catalyzes the formation of a hydroxyacyl-CoA by addition of water on enoyl-CoA. Also exhibits 3-hydroxyacyl-CoA epimerase and 3-hydroxyacyl-CoA dehydrogenase activities. The sequence is that of Fatty acid oxidation complex subunit alpha from Photobacterium profundum (strain SS9).